The primary structure comprises 362 residues: tRNA-specific 2-thiouridylase MnmA 1 (362 aa).

Residues 12–19 (GMSGGVDS) and M38 contribute to the ATP site. The active-site Nucleophile is the C104. An intrachain disulfide couples C104 to C200. G128 serves as a coordination point for ATP. The tract at residues 150-152 (KDQ) is interaction with tRNA. C200 acts as the Cysteine persulfide intermediate in catalysis. The interval 306 to 307 (RY) is interaction with tRNA.

This sequence belongs to the MnmA/TRMU family.

It is found in the cytoplasm. The enzyme catalyses S-sulfanyl-L-cysteinyl-[protein] + uridine(34) in tRNA + AH2 + ATP = 2-thiouridine(34) in tRNA + L-cysteinyl-[protein] + A + AMP + diphosphate + H(+). Functionally, catalyzes the 2-thiolation of uridine at the wobble position (U34) of tRNA, leading to the formation of s(2)U34. This is tRNA-specific 2-thiouridylase MnmA 1 from Clostridium tetani (strain Massachusetts / E88).